We begin with the raw amino-acid sequence, 386 residues long: F420 non-reducing hydrogenase I small subunit (386 aa).

Residues 1-51 constitute a signal peptide (tat-type signal); the sequence is MVEMSTGTTNLVRTLDSMDFLKMDRRTFMKAVSALGATAFLGTYQTEIVNA. Residues cysteine 67, cysteine 70, cysteine 178, cysteine 227, histidine 273, cysteine 276, cysteine 296, and cysteine 302 each coordinate [4Fe-4S] cluster. Cysteine 311, cysteine 330, and cysteine 333 together coordinate [3Fe-4S] cluster.

This sequence belongs to the [NiFe]/[NiFeSe] hydrogenase small subunit family. As to quaternary structure, composed of a large subunit (VhoA), a small subunit (VhoG) and a cytochrome subunit (VhoC). It depends on [4Fe-4S] cluster as a cofactor. Requires [3Fe-4S] cluster as cofactor. Predicted to be exported by the Tat system. The position of the signal peptide cleavage has not been experimentally proven.

Its subcellular location is the cell membrane. The catalysed reaction is methanophenazine + H2 = dihydromethanophenazine. Part of the F420 non-reducing hydrogenase I complex that catalyzes the reduction of methanophenazine to dihydromethanophenazine. The chain is F420 non-reducing hydrogenase I small subunit from Methanosarcina mazei (strain ATCC BAA-159 / DSM 3647 / Goe1 / Go1 / JCM 11833 / OCM 88) (Methanosarcina frisia).